The sequence spans 169 residues: Small ribosomal subunit protein uS5c (169 aa).

Residues 17–80 (WQERVVQIRR…ADGKKHVVEV (64 aa)) form the S5 DRBM domain.

It belongs to the universal ribosomal protein uS5 family. In terms of assembly, part of the 30S ribosomal subunit. Contacts protein S4.

The protein resides in the plastid. It is found in the cyanelle. With S4 and S12 plays an important role in translational accuracy. In Cyanophora paradoxa, this protein is Small ribosomal subunit protein uS5c (rps5).